The chain runs to 254 residues: Uridylate kinase (254 aa).

9-12 (KLSG) is a binding site for ATP. Gly51 contributes to the UMP binding site. Residues Gly52 and Arg56 each contribute to the ATP site. UMP-binding positions include Asp72 and 133-140 (SGNPFFTT). ATP is bound by residues Thr160, Tyr166, and Asp169.

The protein belongs to the UMP kinase family. Homohexamer.

Its subcellular location is the cytoplasm. It catalyses the reaction UMP + ATP = UDP + ADP. The protein operates within pyrimidine metabolism; CTP biosynthesis via de novo pathway; UDP from UMP (UMPK route): step 1/1. Its activity is regulated as follows. Inhibited by UTP. Catalyzes the reversible phosphorylation of UMP to UDP. This chain is Uridylate kinase, found in Synechococcus sp. (strain JA-3-3Ab) (Cyanobacteria bacterium Yellowstone A-Prime).